An 89-amino-acid polypeptide reads, in one-letter code: Small ribosomal subunit protein uS19 (89 aa).

It belongs to the universal ribosomal protein uS19 family.

Protein S19 forms a complex with S13 that binds strongly to the 16S ribosomal RNA. This Azobacteroides pseudotrichonymphae genomovar. CFP2 protein is Small ribosomal subunit protein uS19.